A 603-amino-acid polypeptide reads, in one-letter code: Ribosome-inactivating protein PMRIPt (603 aa).

The signal sequence occupies residues 1–39 (MRVVAGILYIVVMAICGLGIQGGTLQDYPSVYFQDSTLQ). N-linked (GlcNAc...) asparagine glycosylation is found at asparagine 74 and asparagine 168. Residue glutamate 208 is part of the active site. Cystine bridges form between cysteine 297/cysteine 335, cysteine 351/cysteine 370, and cysteine 392/cysteine 409. Ricin B-type lectin domains lie at 338–466 (GEPT…VGDD) and 467–593 (VEPI…WMTM). The 1-alpha repeat unit spans residues 348–388 (DGLCMDVRNESNNDGIPIQLWPCGAQRNQQWTFHTDGTIQS). Residues asparagine 356 and asparagine 408 are each glycosylated (N-linked (GlcNAc...) asparagine). The 1-beta repeat unit spans residues 389 to 430 (MGKCMTSNGYHPGDYVMIFNCSTAPVPDATKWVVSIDGSITN). A 1-gamma repeat occupies 433–466 (SGLVLTAPQAAQTTILLVVRNTHSAKQGRSVGDD). Residues 478–516 (KYMCLQGNNENNTRVWLEDCAVDRPQQWWALYSDGTIRV) form a 2-alpha repeat. Intrachain disulfides connect cysteine 481–cysteine 497 and cysteine 523–cysteine 540. The N-linked (GlcNAc...) asparagine glycan is linked to asparagine 488. Residues 520–558 (RSLCVTSDGHSSRDAIIILTCDGGINQRLVFNTDGTILN) form a 2-beta repeat. Residues 561-597 (AQLVMDVRQSNVALRQIILYQPTGNPNQQWMTMITRT) form a 2-gamma repeat.

Belongs to the ribosome-inactivating protein family. Type 2 RIP subfamily. As to quaternary structure, tetramer of four pairs of disulfide bound A-B chains. In terms of processing, the precursor is processed in two chains, A and B, that are linked by a disulfide bond. Post-translationally, glycosylated. As to expression, expressed in rhizome and more abundantly in leaves (at protein level).

The catalysed reaction is Endohydrolysis of the N-glycosidic bond at one specific adenosine on the 28S rRNA.. With respect to regulation, strongly inhibited by asialofetuin and asialomucin. Functionally, galNAc-specific agglutinin. Behaves as a type-2 ribosome-inactivating protein. Inhibits mammalian ribosomes. The A chain is responsible for inhibiting protein synthesis through the catalytic inactivation of 60S ribosomal subunits by removing adenine from position 4,324 of 28S rRNA. The B chain binds to cell receptors and probably facilitates the entry into the cell of the A chain; B chains are also responsible for cell agglutination (lectin activity). Involved in plant defense against insects. Has very low cytotoxic activity against the human tumor cell lines CEM and Molt4. This is Ribosome-inactivating protein PMRIPt from Polygonatum multiflorum (Solomon's seal).